The primary structure comprises 377 residues: uncharacterized protein (377 aa).

The interval 1–25 (MAQQTNVAGQKTEKQRKAPFRADHV) is disordered. The segment covering 11–24 (KTEKQRKAPFRADH) has biased composition (basic and acidic residues).

The protein to B.subtilis YxjG.

This is an uncharacterized protein from Bacillus subtilis (strain 168).